The following is an 892-amino-acid chain: MPPAIARFVAIAAVLLCGHVAVAAESGGVGGGSARRVLHQPLFPIEWTPPPSPPPPPAPDFTSDPSTPPAPDAPSGDFFPPAPPTTTTPTSPGTTPSPTTVAADVSKTPSGSGSGHHGGGPTKATIVAAGAGAAAAVALLGFACAFLITGRARRRGDSQKLLGPDRAGAHRSAATSAADFLYVGTVEPTTPARHHGPTTADLVGSPYRKLRSERARRGVSRDEDADHPSPELRPLPPLRRAATLGSSDEDGYYTPRQLSGGSGGGGAAEAWSSASASSPPTTTTASRRSLPSMTSDFFPPVAAIAAPPAPPPARSRRTPPRTRFSTGSTPDTKQVTSPSPRPVQPSNAPPPPPPPPPPPPPPPPPKLNTAPKPPPPPPPPPSVPSNNNLPKPAEPPAVPTSRRRLLKPLPPEGPRIAMPMPITAATTVDNNGSTSMREGDNAAADDGGSGEPRPKLKPLHWDKVRATSDRAMVWDQLKSSSFQLDEDMIEALFMNNSTPAAPPREVGRKAAGVPSFRQEERVLDPKKAQNIAILLRALNVTREEVSDALLDGNAECLGSELLETLVKMAPTKEEELKLRDYSGDLSKLGSAERFLKAVLDIPFAFKRVDAMLYRANFETEINYLRNSFETLEAACEDLRGSRLFLKLLEAVLRTGNRMNVGTNRGEAKAFKLDTLLKLADVKGTDGKTTLLHFVVQEIIRSEDAKSEKESAMISSSKDDRKHGLKVVSGLSSELGNVKKAATMDFDVLHGYVNKLETGLEKIKSVLQLEKKCTQGQRFFMSMQDFLKEAEREIERVRGEERRALGRVKDITEYFHGDTAKEEAHPLRIFMVVRDFLSTLDQVCREVGRMQQDRTVIGGSARSFRISATSSLPVLSLYGQRRENNSDDDSSSS.

A signal peptide spans 1-23; it reads MPPAIARFVAIAAVLLCGHVAVA. The disordered stretch occupies residues 43–119; sequence FPIEWTPPPS…SGSGSGHHGG (77 aa). Pro residues predominate over residues 47–59; it reads WTPPPSPPPPPAP. Positions 87–111 are enriched in low complexity; that stretch reads TTPTSPGTTPSPTTVAADVSKTPSG. A helical membrane pass occupies residues 126–146; it reads IVAAGAGAAAAVALLGFACAF. A disordered region spans residues 188-457; it reads PTTPARHHGP…GSGEPRPKLK (270 aa). A compositionally biased stretch (basic and acidic residues) spans 210-230; the sequence is LRSERARRGVSRDEDADHPSP. Low complexity-rich tracts occupy residues 268–286, 297–306, and 321–330; these read AEAWSSASASSPPTTTTAS, FFPPVAAIAA, and RTRFSTGSTP. The span at 339–383 shows a compositional bias: pro residues; the sequence is SPRPVQPSNAPPPPPPPPPPPPPPPPPKLNTAPKPPPPPPPPPSV. Over residues 424–436 the composition is skewed to polar residues; the sequence is AATTVDNNGSTSM. Positions 446 to 867 constitute an FH2 domain; it reads DGGSGEPRPK…GSARSFRISA (422 aa).

The protein belongs to the formin-like family. Class-I subfamily.

It localises to the membrane. The sequence is that of Formin-like protein 8 (FH8) from Oryza sativa subsp. japonica (Rice).